The following is a 498-amino-acid chain: Phosphoethanolamine N-methyltransferase 1 (498 aa).

S-adenosyl-L-homocysteine-binding residues include Gly-68, Arg-73, Asp-89, Asp-115, Val-116, and Asn-134. Phosphocholine-binding residues include Ser-167, Ser-172, Gly-173, Arg-177, and Tyr-184. Residues 253–254 (QY) and Tyr-262 each bind N-methylethanolamine phosphate. Tyr-262 contributes to the phosphocholine binding site. Val-271, Ser-272, Gly-298, Asp-320, Asp-346, Cys-347, and Arg-363 together coordinate S-adenosyl-L-homocysteine. Tyr-394, Tyr-408, Arg-412, Tyr-414, and Lys-480 together coordinate phosphocholine. N-methylethanolamine phosphate contacts are provided by residues Tyr-394, Tyr-408, 412-414 (RGY), and Lys-480.

This sequence belongs to the class I-like SAM-binding methyltransferase superfamily. PEAMT family.

It carries out the reaction phosphoethanolamine + S-adenosyl-L-methionine = N-methylethanolamine phosphate + S-adenosyl-L-homocysteine + H(+). The enzyme catalyses N-methylethanolamine phosphate + S-adenosyl-L-methionine = N,N-dimethylethanolamine phosphate + S-adenosyl-L-homocysteine + H(+). The catalysed reaction is N,N-dimethylethanolamine phosphate + S-adenosyl-L-methionine = phosphocholine + S-adenosyl-L-homocysteine + H(+). Its pathway is phospholipid metabolism; phosphatidylcholine biosynthesis; phosphocholine from phosphoethanolamine: step 1/1. With respect to regulation, inhibited by phosphatidic acid. Functionally, involved in phosphocholine biosynthesis. Catalyzes the N-methylation of phosphoethanolamine, phosphomonomethylethanolamine and phosphodimethylethanolamine, the three methylation steps required to convert phosphoethanolamine to phosphocholine (PC). This chain is Phosphoethanolamine N-methyltransferase 1, found in Triticum aestivum (Wheat).